A 447-amino-acid polypeptide reads, in one-letter code: Voltage-gated purine nucleotide uniporter SLC17A9 (447 aa).

The interval 1 to 26 (MPSQRSSLMQPIPEETRKTPSAAAED) is disordered. Over residues 14–26 (EETRKTPSAAAED) the composition is skewed to basic and acidic residues. A run of 11 helical transmembrane segments spans residues 36–58 (LWTG…MPVC), 74–94 (GIVL…GGHL), 103–123 (VILL…LLAH), 129–149 (LAFV…YFPA), 169–189 (TVGA…SVLL), 197–217 (VFYF…KYLL), 252–272 (VWAV…LLSW), 287–307 (WVFN…SGFI), 327–347 (VMGL…TSFL), 380–400 (GFLF…GVCL), and 413–433 (CVFH…LVFG).

The protein belongs to the major facilitator superfamily. Sodium/anion cotransporter family.

The protein localises to the cytoplasmic vesicle. It is found in the secretory vesicle. It localises to the chromaffin granule membrane. The protein resides in the secretory vesicle membrane. Its subcellular location is the lysosome membrane. The catalysed reaction is ATP(in) = ATP(out). The enzyme catalyses ADP(in) = ADP(out). It catalyses the reaction GTP(in) = GTP(out). Its activity is regulated as follows. Activity is chloride-dependent. Functionally, voltage-gated ATP nucleotide uniporter that can also transport the purine nucleotides ADP and GTP. Uses the membrane potential as the driving force to control ATP accumulation in lysosomes and secretory vesicles. By controlling ATP storage in lysosomes, regulates ATP-dependent proteins of these organelles. Also indirectly regulates the exocytosis of ATP through its import into lysosomes in astrocytes and secretory vesicles such as adrenal chromaffin granules, mucin granules and synaptic vesicles. This is Voltage-gated purine nucleotide uniporter SLC17A9 from Rattus norvegicus (Rat).